Reading from the N-terminus, the 292-residue chain is Ribosomal RNA small subunit methyltransferase I (292 aa).

The protein belongs to the methyltransferase superfamily. RsmI family.

It localises to the cytoplasm. The catalysed reaction is cytidine(1402) in 16S rRNA + S-adenosyl-L-methionine = 2'-O-methylcytidine(1402) in 16S rRNA + S-adenosyl-L-homocysteine + H(+). In terms of biological role, catalyzes the 2'-O-methylation of the ribose of cytidine 1402 (C1402) in 16S rRNA. The sequence is that of Ribosomal RNA small subunit methyltransferase I from Bacillus subtilis (strain 168).